Consider the following 184-residue polypeptide: ATP synthase subunit delta (184 aa).

Belongs to the ATPase delta chain family. As to quaternary structure, F-type ATPases have 2 components, F(1) - the catalytic core - and F(0) - the membrane proton channel. F(1) has five subunits: alpha(3), beta(3), gamma(1), delta(1), epsilon(1). F(0) has three main subunits: a(1), b(2) and c(10-14). The alpha and beta chains form an alternating ring which encloses part of the gamma chain. F(1) is attached to F(0) by a central stalk formed by the gamma and epsilon chains, while a peripheral stalk is formed by the delta and b chains.

It localises to the cell membrane. F(1)F(0) ATP synthase produces ATP from ADP in the presence of a proton or sodium gradient. F-type ATPases consist of two structural domains, F(1) containing the extramembraneous catalytic core and F(0) containing the membrane proton channel, linked together by a central stalk and a peripheral stalk. During catalysis, ATP synthesis in the catalytic domain of F(1) is coupled via a rotary mechanism of the central stalk subunits to proton translocation. Functionally, this protein is part of the stalk that links CF(0) to CF(1). It either transmits conformational changes from CF(0) to CF(1) or is implicated in proton conduction. The chain is ATP synthase subunit delta from Bacillus licheniformis (strain ATCC 14580 / DSM 13 / JCM 2505 / CCUG 7422 / NBRC 12200 / NCIMB 9375 / NCTC 10341 / NRRL NRS-1264 / Gibson 46).